The following is a 3637-amino-acid chain: Replicase polyprotein 1ab (3637 aa).

The C4-type; atypical zinc finger occupies 8 to 28; it reads CLCTPNARVFWERGQVYCTRC. The 113-residue stretch at 69-181 folds into the Peptidase C31 domain; sequence ECRPGGMCWL…KGLCPFADAR (113 aa). Residues 69–183 are PCP1-alpha; that stretch reads ECRPGGMCWL…LCPFADARAN (115 aa). Residues Cys76 and His147 each act as for Nsp1-alpha papain-like cysteine proteinase activity in the active site. Residues 262-380 are PCP1-beta; it reads RDTKFSKCWE…KFRFQTRKYY (119 aa). In terms of domain architecture, Peptidase C32 spans 262–381; it reads RDTKFSKCWE…FRFQTRKYYG (120 aa). Residues Cys269 and His340 each act as for Nsp1-beta papain-like cysteine proteinase activity in the active site. Positions 381–486 constitute a Peptidase C33 domain; the sequence is GYSPPGDGAC…RGVCGECEMG (106 aa). Residues Cys390 and His456 each act as for Nsp2 cysteine proteinase activity in the active site. Disordered stretches follow at residues 676–743 and 865–899; these read CKPK…AALK and QQKTSGGCGEREFKDVGRKSGAERTPSKRDLGVSL. Residues 678 to 689 show a composition bias toward basic residues; that stretch reads PKRKRSRKKKTR. Basic and acidic residues-rich tracts occupy residues 714 to 727 and 873 to 895; these read DTRETCASEKKAEK and GEREFKDVGRKSGAERTPSKRDL. The next 7 membrane-spanning stretches (helical) occupy residues 940 to 960, 981 to 1001, 1083 to 1103, 1287 to 1307, 1362 to 1382, 1390 to 1410, and 1423 to 1443; these read WLNHQVFVLSSHLLAVWSFIF, VLLCFYLPAIGFMTLVGCVFG, FYFLRLMVLLDLGLVFLAVAL, IADFVCLGLYVLLNFLLSAWL, ALMVAIMATVAIFFAKISLLV, CLLMYAFPSLSIAAFGFPFVL, and VQFFLLAVNVWAGVASVVVLI. The tract at residues 979–1103 is HD1; it reads CCVLLCFYLP…LGLVFLAVAL (125 aa). Positions 1287–1446 are HD2; the sequence is IADFVCLGLY…ASVVVLISSW (160 aa). The region spanning 1511–1712 is the Peptidase S32 domain; it reads GSLRTRGCAK…AVVESLPALE (202 aa). Residues His1549, Asp1574, and Ser1626 each act as charge relay system; for 3C-like serine proteinase activity in the active site. 5 consecutive transmembrane segments (helical) span residues 1735–1755, 1761–1781, 1801–1821, 1824–1844, and 1853–1873; these read DVPVIRIAFFFLNEILPVMLA, FALSLFFCVHWLFCSSVAVAF, LVIAALNRPCGPFGFSLLGQL, CCLMLCLLDIELQLLGCLYLG, and EIFFHPTGQFMFLPLFLSLFK. Residues 1735-1872 are HD3; sequence DVPVIRIAFF…MFLPLFLSLF (138 aa). Residues 2214–2372 form the NiRAN domain; sequence SLNGLQQASA…LPYKLHPVRG (159 aa). Residues 2611–2745 form the RdRp catalytic domain; the sequence is GRCLEADLAS…YDESSELPNY (135 aa). Positions 2865-2928 constitute an AV ZBD domain; sequence KKKCRTCAHC…SPVMSLNTEL (64 aa). Residues Cys2871, Cys2874, Cys2884, Cys2889, His2892, His2894, His2896, His2898, Cys2905, His2907, Cys2914, and Cys2917 each contribute to the Zn(2+) site. The 153-residue stretch at 2985 to 3137 folds into the (+)RNA virus helicase ATP-binding domain; it reads QVMKVAQTCA…AFALMLGRQL (153 aa). 3013 to 3020 serves as a coordination point for ATP; it reads GAPGTGKT. A (+)RNA virus helicase C-terminal domain is found at 3138 to 3269; the sequence is IEVFRFGPSI…CGEQPMMISE (132 aa). Residues 3293-3389 enclose the AV-Nsp11N/CoV-Nsp15M domain; it reads EGTASPLPQV…LTKFLKGKPV (97 aa). The NendoU domain maps to 3391–3513; that stretch reads LPDSLMSTGR…MVWKDATAYF (123 aa). Active-site residues include His3422, His3437, and Lys3466.

The protein belongs to the arteriviridae polyprotein family. In terms of processing, specific enzymatic cleavages in vivo by its own proteases yield mature proteins. There are two alternative pathways for processing. Either nsp4-5 is cleaved, which represents the major pathway or the nsp5-6 and nsp6-7 are processed, which represents the minor pathway. The major pathway occurs when nsp2 acts as a cofactor for nsp4.

The protein localises to the host membrane. It is found in the host cytoplasm. The protein resides in the host perinuclear region. The catalysed reaction is RNA(n) + a ribonucleoside 5'-triphosphate = RNA(n+1) + diphosphate. The enzyme catalyses ATP + H2O = ADP + phosphate + H(+). It carries out the reaction uridylyl-uridylyl-ribonucleotide-RNA = a 3'-end uridylyl-2',3'-cyclophospho-uridine-RNA + a 5'-end dephospho-ribonucleoside-RNA. The replicase polyprotein 1ab is a multifunctional protein: it contains the activities necessary for the transcription of negative stranded RNA, leader RNA, subgenomic mRNAs and progeny virion RNA as well as proteinases responsible for the cleavage of the polyprotein into functional products. Functionally, the Nsp1 chain is essential for viral subgenomic mRNA synthesis. In terms of biological role, the 3C-like serine proteinase chain is responsible for the majority of cleavages as it cleaves the C-terminus of the polyprotein. Its function is as follows. The helicase chain, which contains a zinc finger structure, displays RNA and DNA duplex-unwinding activities with 5' to 3' polarity. Plays a role in viral transcription/replication and prevents the simultaneous activation of host cell dsRNA sensors, such as MDA5/IFIH1, OAS, and PKR. Acts by degrading the 5'-polyuridines generated during replication of the poly(A) region of viral genomic and subgenomic RNAs. Catalyzes a two-step reaction in which a 2'3'-cyclic phosphate (2'3'-cP) is first generated by 2'-O transesterification, which is then hydrolyzed to a 3'-phosphate (3'-P). If not degraded, poly(U) RNA would hybridize with poly(A) RNA tails and activate host dsRNA sensors. This is Replicase polyprotein 1ab (rep) from Mus musculus domesticus (western European house mouse).